The sequence spans 53 residues: MENFILLIVGFIYGAGGVLLYSVYKEVREMKQIFEQILSQMQTKDYEETNDFM.

The helical transmembrane segment at 4-24 (FILLIVGFIYGAGGVLLYSVY) threads the bilayer.

Its subcellular location is the host membrane. This is an uncharacterized protein from Acidianus bottle-shaped virus (isolate Italy/Pozzuoli) (ABV).